The chain runs to 582 residues: Hemagglutinin-neuraminidase (582 aa).

Residues 35 to 55 traverse the membrane as a helical segment; that stretch reads ILVLSVQAVTLILVIVNLGEL. Intrachain disulfides connect cysteine 178–cysteine 202, cysteine 192–cysteine 253, and cysteine 244–cysteine 257. N-linked (GlcNAc...) asparagine; by host glycans are attached at residues asparagine 284 and asparagine 329. 3 disulfides stabilise this stretch: cysteine 350-cysteine 471, cysteine 382-cysteine 392, and cysteine 465-cysteine 475. 2 N-linked (GlcNAc...) asparagine; by host glycosylation sites follow: asparagine 400 and asparagine 448. Asparagine 507 carries N-linked (GlcNAc...) asparagine; by host glycosylation. Cysteines 545 and 556 form a disulfide.

Belongs to the paramyxoviruses hemagglutinin-neuraminidase family. In terms of assembly, homotetramer; composed of disulfide-linked homodimers. Interacts with F protein trimer.

It localises to the virion membrane. The protein localises to the host cell membrane. It carries out the reaction Hydrolysis of alpha-(2-&gt;3)-, alpha-(2-&gt;6)-, alpha-(2-&gt;8)- glycosidic linkages of terminal sialic acid residues in oligosaccharides, glycoproteins, glycolipids, colominic acid and synthetic substrates.. Its function is as follows. Attaches the virus to alpha-2,3-linked sialic acid-containing cell receptors and thereby initiating infection. Binding of HN protein to the receptor induces a conformational change that allows the F protein to trigger virion/cell membranes fusion. Binds to the glycan motifs sialyl Lewis (SLe) and GM2 ganglioside (GM2-glycan). Neuraminidase activity ensures the efficient spread of the virus by dissociating the mature virions from the neuraminic acid containing glycoproteins. The chain is Hemagglutinin-neuraminidase (HN) from Homo sapiens (Human).